The following is a 281-amino-acid chain: RNA polymerase sigma factor RpoH (281 aa).

The sigma-70 factor domain-2 stretch occupies residues 52–121 (LILSHLRFVI…IHEYVLRNWR (70 aa)). The Interaction with polymerase core subunit RpoC signature appears at 76 to 79 (DLIQ). The sigma-70 factor domain-4 stretch occupies residues 226 to 277 (ALQSLDARSQDIIKARWLDDNKATLHDLAAKYNVSAERIRQLETNALKKLKS). The segment at residues 250-269 (LHDLAAKYNVSAERIRQLET) is a DNA-binding region (H-T-H motif).

It belongs to the sigma-70 factor family. RpoH subfamily. As to quaternary structure, interacts with the RNA polymerase core enzyme.

It localises to the cytoplasm. Sigma factors are initiation factors that promote the attachment of RNA polymerase to specific initiation sites and are then released. This sigma factor is involved in regulation of expression of heat shock genes. The sequence is that of RNA polymerase sigma factor RpoH from Haemophilus influenzae (strain ATCC 51907 / DSM 11121 / KW20 / Rd).